The chain runs to 323 residues: MTKTFRNPQLTKNGELKHLLSIEGLSRDMITHILDTASQFVSLSDSDREVKKVPLLRGKSVFNLFFENSTRTRTTFEIAAKRLSADVLNLNINASSTSKGESLLDTINNLSAMSADMFVVRHASSGAPYLIAEHVAPHVHVINAGDGRHAHPTQGLLDMYTIRHFKKDFTNLTVAIVGDILHSRVARSDIHALTTLGVPEVRAIGPRTLLPSGLEQMGVRVFHNMEEGLKGVDVVIMLRLQNERMTGALLPSAQEYFKAYGLTPERLALAKPDAIVMHPGPMNRGVEIDSAVADGPQSVILNQVTFGIAVRMAVMGIVAGNND.

Residues arginine 71 and threonine 72 each contribute to the carbamoyl phosphate site. Lysine 99 lines the L-aspartate pocket. Carbamoyl phosphate is bound by residues arginine 121, histidine 151, and glutamine 154. Positions 184 and 239 each coordinate L-aspartate. Residues glycine 280 and proline 281 each coordinate carbamoyl phosphate.

This sequence belongs to the aspartate/ornithine carbamoyltransferase superfamily. ATCase family. As to quaternary structure, heterododecamer (2C3:3R2) of six catalytic PyrB chains organized as two trimers (C3), and six regulatory PyrI chains organized as three dimers (R2).

It carries out the reaction carbamoyl phosphate + L-aspartate = N-carbamoyl-L-aspartate + phosphate + H(+). It functions in the pathway pyrimidine metabolism; UMP biosynthesis via de novo pathway; (S)-dihydroorotate from bicarbonate: step 2/3. Catalyzes the condensation of carbamoyl phosphate and aspartate to form carbamoyl aspartate and inorganic phosphate, the committed step in the de novo pyrimidine nucleotide biosynthesis pathway. This is Aspartate carbamoyltransferase catalytic subunit from Cupriavidus metallidurans (strain ATCC 43123 / DSM 2839 / NBRC 102507 / CH34) (Ralstonia metallidurans).